Reading from the N-terminus, the 267-residue chain is MTLWQAFILSLIQGITEFLPISSSGHLVITRELLHWQDAGVAFDAFTGLGTLTAVLFYYRKDVCSILYHWFRQFRHCDAPPAPEAKLGNQLIVATLPALLIGFMVKDHIDALTHRPLLIASTTMIFAIFLAAADFWGRKKLSLPETNYRQAFYYGLAQTLALVPGVSRSGITLTAGLAMHFSRESAARFSFLQSIPISAAAGGYGLWKLATNPSDFSWQLIALSYVTATLAAYVCIALFIRFLNTVGMMPHVIYRLLLGAYLFFVFM.

7 helical membrane passes run 1-21 (MTLW…FLPI), 39-59 (AGVA…LFYY), 85-105 (AKLG…GFMV), 117-137 (LLIA…DFWG), 189-209 (FSFL…LWKL), 220-240 (LIAL…ALFI), and 246-266 (VGMM…FFVF).

It belongs to the UppP family.

The protein resides in the cell inner membrane. It carries out the reaction di-trans,octa-cis-undecaprenyl diphosphate + H2O = di-trans,octa-cis-undecaprenyl phosphate + phosphate + H(+). Its function is as follows. Catalyzes the dephosphorylation of undecaprenyl diphosphate (UPP). Confers resistance to bacitracin. The chain is Undecaprenyl-diphosphatase from Dichelobacter nodosus (strain VCS1703A).